Here is a 549-residue protein sequence, read N- to C-terminus: Cytoplasmic trehalase (549 aa).

Substrate is bound by residues Arg-168, 175–176, Asn-212, 221–223, 292–294, and Gly-324; these read WD, RSQ, and RDE. Residues Asp-326 and Glu-509 each act as proton donor/acceptor in the active site. Residue Glu-525 coordinates substrate.

The protein belongs to the glycosyl hydrolase 37 family. Monomer.

It localises to the cytoplasm. The catalysed reaction is alpha,alpha-trehalose + H2O = alpha-D-glucose + beta-D-glucose. It functions in the pathway glycan degradation; trehalose degradation; D-glucose from alpha,alpha-trehalose: step 1/1. Its function is as follows. Hydrolyzes trehalose to glucose. Could be involved, in cells returning to low osmolarity conditions, in the utilization of the accumulated cytoplasmic trehalose, which was synthesized in response to high osmolarity. The protein is Cytoplasmic trehalase of Salmonella typhi.